Here is a 431-residue protein sequence, read N- to C-terminus: Nocturnin (431 aa).

A mitochondrion-targeting transit peptide spans 1–75 (MFHSPRRLCS…SMGTGTSRLY (75 aa)). The segment covering 20-31 (LRRLPAPGLRRP) has biased composition (low complexity). The disordered stretch occupies residues 20-41 (LRRLPAPGLRRPLSPPAAVPRP). The segment covering 32 to 41 (LSPPAAVPRP) has biased composition (pro residues). E195 is a binding site for Mg(2+). Substrate-binding positions include E195, 219-221 (KPW), N263, 286-289 (HLKA), and 324-326 (DFN). The interaction with PPARG stretch occupies residues 343 to 353 (NLNSAYKLLSA). Residue H414 coordinates substrate.

This sequence belongs to the CCR4/nocturin family. As to quaternary structure, interacts with PPARG. Requires Mg(2+) as cofactor. Adipose tissue. Expression is higher in subcutaneous adipose tissue as compared to visceral adipose tissue.

The protein resides in the cytoplasm. The protein localises to the nucleus. Its subcellular location is the perinuclear region. It is found in the mitochondrion. The catalysed reaction is NADP(+) + H2O = phosphate + NAD(+). The enzyme catalyses NADPH + H2O = phosphate + NADH. Functionally, phosphatase which catalyzes the conversion of NADP(+) to NAD(+) and of NADPH to NADH. Shows a small preference for NADPH over NADP(+). Represses translation and promotes degradation of target mRNA molecules. Plays an important role in post-transcriptional regulation of metabolic genes under circadian control. Exerts a rhythmic post-transcriptional control of genes necessary for metabolic functions including nutrient absorption, glucose/insulin sensitivity, lipid metabolism, adipogenesis, inflammation and osteogenesis. Plays an important role in favoring adipogenesis over osteoblastogenesis and acts as a key regulator of the adipogenesis/osteogenesis balance. Promotes adipogenesis by facilitating PPARG nuclear translocation which activates its transcriptional activity. Regulates circadian expression of NOS2 in the liver and negatively regulates the circadian expression of IGF1 in the bone. Critical for proper development of early embryos. The protein is Nocturnin of Homo sapiens (Human).